The sequence spans 75 residues: Small, acid-soluble spore protein Tlp (75 aa).

It belongs to the Tlp family.

Its subcellular location is the spore core. This is Small, acid-soluble spore protein Tlp from Geobacillus kaustophilus (strain HTA426).